An 880-amino-acid polypeptide reads, in one-letter code: Valine--tRNA ligase (880 aa).

Residues 51–61 (PNVTGELHLGH) carry the 'HIGH' region motif. Positions 529–533 (KMSKT) match the 'KMSKS' region motif. Residue K532 coordinates ATP. The stretch at 815 to 854 (MSTMVDLEAEAKRVEAEIAELETQIERLSARLSDTQFLAK) forms a coiled coil.

The protein belongs to the class-I aminoacyl-tRNA synthetase family. ValS type 1 subfamily. In terms of assembly, monomer.

It localises to the cytoplasm. The catalysed reaction is tRNA(Val) + L-valine + ATP = L-valyl-tRNA(Val) + AMP + diphosphate. In terms of biological role, catalyzes the attachment of valine to tRNA(Val). As ValRS can inadvertently accommodate and process structurally similar amino acids such as threonine, to avoid such errors, it has a 'posttransfer' editing activity that hydrolyzes mischarged Thr-tRNA(Val) in a tRNA-dependent manner. In Dehalococcoides mccartyi (strain ATCC BAA-2266 / KCTC 15142 / 195) (Dehalococcoides ethenogenes (strain 195)), this protein is Valine--tRNA ligase.